Consider the following 194-residue polypeptide: Imidazoleglycerol-phosphate dehydratase (194 aa).

It belongs to the imidazoleglycerol-phosphate dehydratase family.

Its subcellular location is the cytoplasm. It catalyses the reaction D-erythro-1-(imidazol-4-yl)glycerol 3-phosphate = 3-(imidazol-4-yl)-2-oxopropyl phosphate + H2O. Its pathway is amino-acid biosynthesis; L-histidine biosynthesis; L-histidine from 5-phospho-alpha-D-ribose 1-diphosphate: step 6/9. The chain is Imidazoleglycerol-phosphate dehydratase from Bacillus cereus (strain B4264).